A 124-amino-acid polypeptide reads, in one-letter code: Large ribosomal subunit protein bL12 (124 aa).

It belongs to the bacterial ribosomal protein bL12 family. In terms of assembly, homodimer. Part of the ribosomal stalk of the 50S ribosomal subunit. Forms a multimeric L10(L12)X complex, where L10 forms an elongated spine to which 2 to 4 L12 dimers bind in a sequential fashion. Binds GTP-bound translation factors.

Forms part of the ribosomal stalk which helps the ribosome interact with GTP-bound translation factors. Is thus essential for accurate translation. The chain is Large ribosomal subunit protein bL12 from Burkholderia cenocepacia (strain HI2424).